Reading from the N-terminus, the 1062-residue chain is NACHT, LRR and PYD domains-containing protein 2 (1062 aa).

Residues M1–E94 form the Pyrin domain. In terms of domain architecture, NACHT spans Y207–D526. ATP is bound at residue G213–T220. Residue S671 is modified to Phosphoserine. 8 LRR repeats span residues S812 to Y832, F841 to A861, E869 to C889, K898 to T918, S926 to C946, N955 to S976, S983 to F1003, and S1010 to E1033.

It belongs to the NLRP family. Interacts with CHUK. Interacts with IKBKB. Interacts with IKBKG. Interacts with MEFV. Interacts with PYCARD. Interacts (via pyrin domain) with PYDC2. Interacts with CARD8. In terms of tissue distribution, expressed at high levels in lung, placenta and thymus and at lower levels in ovary, intestine and brain. Highly abundant in oocytes and early embryos, however poorly expressed in somatic tissues such as brain, kidney, liver and spinal cord.

The protein localises to the cytoplasm. Its function is as follows. Suppresses TNF- and CD40-induced NFKB1 activity at the level of the IKK complex, by inhibiting NFKBIA degradation induced by TNF. When associated with PYCARD, activates CASP1, leading to the secretion of mature pro-inflammatory cytokine IL1B. May be a component of the inflammasome, a protein complex which also includes PYCARD, CARD8 and CASP1 and whose function would be the activation of pro-inflammatory caspases. The chain is NACHT, LRR and PYD domains-containing protein 2 (NLRP2) from Homo sapiens (Human).